A 280-amino-acid chain; its full sequence is Shikimate dehydrogenase (NADP(+)) (280 aa).

Shikimate is bound by residues 19–21 (SFS) and Thr-66. Lys-70 functions as the Proton acceptor in the catalytic mechanism. Glu-82 is a binding site for NADP(+). The shikimate site is built by Asn-91 and Asp-106. Residues 130–134 (GSGGA) and Leu-222 each bind NADP(+). Residue Tyr-224 participates in shikimate binding. Gly-245 is an NADP(+) binding site.

This sequence belongs to the shikimate dehydrogenase family. As to quaternary structure, homodimer.

It carries out the reaction shikimate + NADP(+) = 3-dehydroshikimate + NADPH + H(+). It functions in the pathway metabolic intermediate biosynthesis; chorismate biosynthesis; chorismate from D-erythrose 4-phosphate and phosphoenolpyruvate: step 4/7. Involved in the biosynthesis of the chorismate, which leads to the biosynthesis of aromatic amino acids. Catalyzes the reversible NADPH linked reduction of 3-dehydroshikimate (DHSA) to yield shikimate (SA). This chain is Shikimate dehydrogenase (NADP(+)), found in Methanococcus maripaludis (strain C7 / ATCC BAA-1331).